Consider the following 239-residue polypeptide: Uridylate kinase (239 aa).

ATP is bound at residue K13–G16. G55 lines the UMP pocket. G56 and R60 together coordinate ATP. UMP contacts are provided by residues D75 and T136 to T143. ATP-binding residues include T163, Q164, Y169, and D172.

The protein belongs to the UMP kinase family. As to quaternary structure, homohexamer.

It localises to the cytoplasm. It catalyses the reaction UMP + ATP = UDP + ADP. It functions in the pathway pyrimidine metabolism; CTP biosynthesis via de novo pathway; UDP from UMP (UMPK route): step 1/1. Its activity is regulated as follows. Inhibited by UTP. In terms of biological role, catalyzes the reversible phosphorylation of UMP to UDP. The polypeptide is Uridylate kinase (Bartonella henselae (strain ATCC 49882 / DSM 28221 / CCUG 30454 / Houston 1) (Rochalimaea henselae)).